A 310-amino-acid chain; its full sequence is Upstream stimulatory factor 1 (310 aa).

Positions 1 to 17 (MKGQQKTAETEEGTVQI) are enriched in polar residues. 2 disordered regions span residues 1–26 (MKGQ…ATGE) and 171–209 (QGGS…EVER). Positions 190-209 (EAPRTTRDEKRRAQHNEVER) are enriched in basic and acidic residues. In terms of domain architecture, bHLH spans 199-254 (KRRAQHNEVERRRRDKINNWIVQLSKIIPDCSMESTKSGQSKGGILSKACDYIQEL). The interval 271 to 292 (LQLDNDVLRQQVEDLKNKNLLL) is leucine-zipper. Lys-306 is covalently cross-linked (Glycyl lysine isopeptide (Lys-Gly) (interchain with G-Cter in SUMO2)).

As to quaternary structure, efficient DNA binding requires dimerization with another bHLH protein. Binds DNA as a homodimer or a heterodimer (USF1/USF2).

The protein resides in the nucleus. Transcription factor that binds to a symmetrical DNA sequence (E-boxes) (5'-CACGTG-3') that is found in a variety of viral and cellular promoters. This chain is Upstream stimulatory factor 1 (Usf1), found in Mus musculus (Mouse).